We begin with the raw amino-acid sequence, 157 residues long: MDRFVSTYTMRLDAKGRVSIPAPFRTVLAKDGADGLYCHPSLAEPALDAGGNRLVGEIDALIESYPPYSEAREELAAALYGTSETLRIDPEGRVVLSDTLKAHAAITDQVAFVGLGHKFRIWEPERLKAHLAEATQRVRELRQAIGSRAENPRSTKA.

SpoVT-AbrB domains lie at 7–52 (TYTM…AGGN) and 83–126 (SETL…EPER).

The protein belongs to the MraZ family. Forms oligomers.

It localises to the cytoplasm. Its subcellular location is the nucleoid. This chain is Transcriptional regulator MraZ, found in Xanthobacter autotrophicus (strain ATCC BAA-1158 / Py2).